The following is a 97-amino-acid chain: Co-chaperonin GroES (97 aa).

It belongs to the GroES chaperonin family. In terms of assembly, heptamer of 7 subunits arranged in a ring. Interacts with the chaperonin GroEL.

It localises to the cytoplasm. Functionally, together with the chaperonin GroEL, plays an essential role in assisting protein folding. The GroEL-GroES system forms a nano-cage that allows encapsulation of the non-native substrate proteins and provides a physical environment optimized to promote and accelerate protein folding. GroES binds to the apical surface of the GroEL ring, thereby capping the opening of the GroEL channel. The protein is Co-chaperonin GroES of Buchnera aphidicola subsp. Tetraneura caerulescens.